The primary structure comprises 753 residues: Photosystem I P700 chlorophyll a apoprotein A1 (753 aa).

8 helical membrane passes run 72–95, 158–181, 197–221, 293–311, 350–373, 389–415, 437–459, and 534–552; these read IFSAHFGHLAIIFVWLSGAYFHGA, LYCTAIGGLVMAALMMFAGWFHYH, MNHHLAGLLGLGCLSWAGHQIHVSL, TAHHHLALAVLFIVAGHMY, WHAQLAINLAMLGSLSIIVAHHMY, LSLFTHHMWIGGFLIVGAGAHGAIFMV, AIISHLNWVCIFLGFHSFGLYVH, and FMVHHIHAFTIHVTALILL. [4Fe-4S] cluster-binding residues include cysteine 576 and cysteine 585. 2 helical membrane-spanning segments follow: residues 592–613 and 667–689; these read HVFLGLFWMYNSLSIVIFHFSW and LSAYGLLFLGAHFIWAFSLMFLF. Histidine 678 is a binding site for chlorophyll a'. Chlorophyll a contacts are provided by methionine 686 and tyrosine 694. Tryptophan 695 lines the phylloquinone pocket. A helical transmembrane segment spans residues 727–747; that stretch reads AVGVAHYLLGGIVTTWAFFLA.

This sequence belongs to the PsaA/PsaB family. In terms of assembly, the PsaA/B heterodimer binds the P700 chlorophyll special pair and subsequent electron acceptors. PSI consists of a core antenna complex that captures photons, and an electron transfer chain that converts photonic excitation into a charge separation. The cyanobacterial PSI reaction center is composed of one copy each of PsaA,B,C,D,E,F,I,J,K,L,M and X, and forms trimeric complexes. The cofactor is PSI electron transfer chain: 5 chlorophyll a, 1 chlorophyll a', 2 phylloquinones and 3 4Fe-4S clusters. PSI core antenna: 90 chlorophyll a, 22 carotenoids, 3 phospholipids and 1 galactolipid. P700 is a chlorophyll a/chlorophyll a' dimer, A0 is one or more chlorophyll a, A1 is one or both phylloquinones and FX is a shared 4Fe-4S iron-sulfur center..

It is found in the cellular thylakoid membrane. It catalyses the reaction reduced [plastocyanin] + hnu + oxidized [2Fe-2S]-[ferredoxin] = oxidized [plastocyanin] + reduced [2Fe-2S]-[ferredoxin]. Functionally, psaA and PsaB bind P700, the primary electron donor of photosystem I (PSI), as well as the electron acceptors A0, A1 and FX. PSI is a plastocyanin/cytochrome c6-ferredoxin oxidoreductase, converting photonic excitation into a charge separation, which transfers an electron from the donor P700 chlorophyll pair to the spectroscopically characterized acceptors A0, A1, FX, FA and FB in turn. Oxidized P700 is reduced on the lumenal side of the thylakoid membrane by plastocyanin or cytochrome c6. This is Photosystem I P700 chlorophyll a apoprotein A1 from Trichodesmium erythraeum (strain IMS101).